The following is a 269-amino-acid chain: Interleukin-1 beta (269 aa).

Positions 1 to 116 (MAEVPELASE…TWDNEAYVHD (116 aa)) are cleaved as a propeptide — removed in mature form; by CASP1. The Involved in interaction with TMED10 C-terminus motif lies at 228–241 (FESAQFPNWYISTS).

It belongs to the IL-1 family. As to quaternary structure, monomer. In its precursor form, weakly interacts with full-length MEFV; the mature cytokine does not interact at all. Interacts with integrins ITGAV:ITGBV and ITGA5:ITGB1; integrin-binding is required for IL1B signaling. Interacts with cargo receptor TMED10; the interaction is direct and is required for the secretion of IL1B mature form. Interacts with HSP90AB1; the interaction facilitates cargo translocation into the ERGIC. Interacts with HSP90B1; the interaction facilitates cargo translocation into the ERGIC. Activation of the IL1B precursor involves a CASP1-catalyzed proteolytic cleavage. Processing and secretion are temporarily associated. Post-translationally, (Microbial infection) Cleavage by S.pyogenes cysteine protease SpeB promotes its activation independently of CASP1. In terms of tissue distribution, expressed in activated monocytes/macrophages (at protein level).

Its subcellular location is the cytoplasm. The protein localises to the cytosol. The protein resides in the secreted. It is found in the lysosome. It localises to the extracellular exosome. Its activity is regulated as follows. (Microbial infection) Cleavage by S.pyogenes cysteine protease SpeB promotes its activation independently of CASP1. SpeB-mediated maturation of IL1B plays a dual role depending on infection site: while IL1B inflammatory response prevents bacterial growth during invasive skin infections, it promotes streptococcal infection of the nasopharynx by disrupting colonization resistance mediated by the microbiota. In terms of biological role, potent pro-inflammatory cytokine. Initially discovered as the major endogenous pyrogen, induces prostaglandin synthesis, neutrophil influx and activation, T-cell activation and cytokine production, B-cell activation and antibody production, and fibroblast proliferation and collagen production. Promotes Th17 differentiation of T-cells. Synergizes with IL12/interleukin-12 to induce IFNG synthesis from T-helper 1 (Th1) cells. Plays a role in angiogenesis by inducing VEGF production synergistically with TNF and IL6. Involved in transduction of inflammation downstream of pyroptosis: its mature form is specifically released in the extracellular milieu by passing through the gasdermin-D (GSDMD) pore. Acts as a sensor of S.pyogenes infection in skin: cleaved and activated by pyogenes SpeB protease, leading to an inflammatory response that prevents bacterial growth during invasive skin infection. This is Interleukin-1 beta from Homo sapiens (Human).